The following is a 3411-amino-acid chain: Genome polyprotein (3411 aa).

The Cytoplasmic portion of the chain corresponds to M1–D104. Residues P38–L72 are hydrophobic; homodimerization of capsid protein C. Residues S102–G121 constitute a propeptide, ER anchor for the capsid protein C, removed in mature form by serine protease NS3. A helical transmembrane segment spans residues V105 to V125. Topologically, residues R126–R244 are extracellular. N134 and N150 each carry an N-linked (GlcNAc...) asparagine; by host glycan. A helical membrane pass occupies residues W245 to S265. Over N266 to R270 the chain is Cytoplasmic. Residues V271–S285 traverse the membrane as a helical segment. Topologically, residues A286–L730 are extracellular. Cystine bridges form between C288–C315, C345–C401, C345–C406, C359–C390, C377–C401, C377–C406, C467–C568, and C585–C615. The fusion peptide stretch occupies residues D383–G396. Residues F731 to I751 traverse the membrane as a helical segment. Residues N752–T757 are Extracellular-facing. Residues M758 to A778 form a helical membrane-spanning segment. Over D779–E1132 the chain is Extracellular. 6 disulfides stabilise this stretch: C782-C793, C833-C921, C957-C1002, C1058-C1107, C1069-C1091, and C1090-C1094. N-linked (GlcNAc...) asparagine; by host glycosylation is found at N908 and N986. A helical transmembrane segment spans residues I1133–K1153. Residues R1154–A1201 lie on the Cytoplasmic side of the membrane. A helical transmembrane segment spans residues M1202–L1222. The Lumenal segment spans residues R1223–P1287. The chain crosses the membrane as a helical span at residues V1288–V1308. Over L1309–S1355 the chain is Cytoplasmic. A helical transmembrane segment spans residues I1356–F1376. Over Q1377–E1378 the chain is Lumenal. The chain crosses the membrane as a helical span at residues M1379–A1399. Residues G1400–L1456 lie on the Cytoplasmic side of the membrane. An interacts with and activates NS3 protease region spans residues L1407–V1446. The helical intramembrane region spans A1457–F1477. The Cytoplasmic segment spans residues H1478 to A2157. A Peptidase S7 domain is found at S1485 to L1665. Catalysis depends on charge relay system; for serine protease NS3 activity residues H1537, D1561, and S1622. The Helicase ATP-binding domain maps to P1669 to Q1825. The tract at residues K1673–M1676 is important for RNA-binding. An ATP-binding site is contributed by Y1682–T1689. The DEAH box motif lies at D1773–H1776. The region spanning E1820–Y1997 is the Helicase C-terminal domain. An N6-acetyllysine; by host modification is found at K1877. A helical membrane pass occupies residues M2158–F2178. At M2179–R2186 the chain is on the lumenal side. An intramembrane region (helical) is located at residues M2187–K2207. Over P2208–T2209 the chain is Lumenal. Residues H2210–G2230 form a helical membrane-spanning segment. Over Q2231–A2241 the chain is Cytoplasmic. The chain crosses the membrane as a helical span at residues Y2242 to L2262. Residues E2263–G2293 are Lumenal-facing. Positions A2294 to I2314 form an intramembrane region, helical. Topologically, residues K2315–I2360 are lumenal. The helical transmembrane segment at T2361–L2380 threads the bilayer. Topologically, residues P2381–A2421 are cytoplasmic. Residues L2422–M2442 form a helical membrane-spanning segment. Over C2443 to T2445 the chain is Lumenal. Residues P2446 to G2466 traverse the membrane as a helical segment. Residues N2467–I3411 are Cytoplasmic-facing. The region spanning G2507–S2771 is the mRNA cap 0-1 NS5-type MT domain. Position 2562 (S2562) interacts with S-adenosyl-L-methionine. At S2562 the chain carries Phosphoserine. K2567 (for 2'-O-MTase activity) is an active-site residue. 6 residues coordinate S-adenosyl-L-methionine: G2592, W2593, T2610, L2611, D2637, and I2638. D2652 functions as the For 2'-O-MTase activity in the catalytic mechanism. Residue I2653 participates in S-adenosyl-L-methionine binding. Residues K2688 and E2724 each act as for 2'-O-MTase activity in the active site. Residue Y2726 coordinates S-adenosyl-L-methionine. The short motif at R2878–R2911 is the Nuclear localization signal element. Residues E2945, H2949, C2954, and C2957 each coordinate Zn(2+). The RdRp catalytic domain maps to G3035–A3187. Residues H3222, C3238, and C3357 each contribute to the Zn(2+) site.

This sequence in the N-terminal section; belongs to the class I-like SAM-binding methyltransferase superfamily. mRNA cap 0-1 NS5-type methyltransferase family. Homodimer. Interacts (via N-terminus) with host EXOC1 (via C-terminus); this interaction results in EXOC1 degradation through the proteasome degradation pathway. In terms of assembly, forms heterodimers with envelope protein E in the endoplasmic reticulum and Golgi. As to quaternary structure, homodimer; in the endoplasmic reticulum and Golgi. Interacts with protein prM. Interacts with non-structural protein 1. Homodimer; Homohexamer when secreted. Interacts with envelope protein E. In terms of assembly, interacts (via N-terminus) with serine protease NS3. As to quaternary structure, forms a heterodimer with serine protease NS3. May form homooligomers. Forms a heterodimer with NS2B. Interacts with non-structural protein 2A (via N-terminus). Interacts with NS4B. Interacts with unphosphorylated RNA-directed RNA polymerase NS5; this interaction stimulates RNA-directed RNA polymerase NS5 guanylyltransferase activity. NS3 interacts with host PDCD6IP; this interaction contributes to virion release. In terms of assembly, interacts with serine protease NS3. As to quaternary structure, homodimer. Interacts with host STAT2; this interaction prevents the establishment of cellular antiviral state. Interacts with serine protease NS3. Interacts with host TRIM23; this interaction leads to NS5 ubiquitination. Specific enzymatic cleavages in vivo yield mature proteins. The nascent capsid protein C contains a C-terminal hydrophobic domain that act as a signal sequence for translocation of prM into the lumen of the ER. Mature capsid protein C is cleaved at a site upstream of this hydrophobic domain by NS3. prM is cleaved in post-Golgi vesicles by a host furin, releasing the mature small envelope protein M, and peptide pr. Non-structural protein 2A-alpha, a C-terminally truncated form of non-structural protein 2A, results from partial cleavage by NS3. Specific enzymatic cleavages in vivo yield mature proteins peptide 2K acts as a signal sequence and is removed from the N-terminus of NS4B by the host signal peptidase in the ER lumen. Signal cleavage at the 2K-4B site requires a prior NS3 protease-mediated cleavage at the 4A-2K site. Post-translationally, cleaved in post-Golgi vesicles by a host furin, releasing the mature small envelope protein M, and peptide pr. This cleavage is incomplete as up to 30% of viral particles still carry uncleaved prM. In terms of processing, N-glycosylated. N-glycosylated. The excreted form is glycosylated and this is required for efficient secretion of the protein from infected cells. Post-translationally, polyubiquitinated; ubiquitination is probably mediated by host TRIM23 and is prerequisite for NS5-STAT2 interaction. NS5 is not ISGylated or sumoylated. In terms of processing, acetylated by host KAT5. Acetylation modulates NS3 RNA-binding and unwinding activities and plays an important positive role for viral replication. Phosphorylated on serines residues. This phosphorylation may trigger NS5 nuclear localization.

The protein resides in the virion. It localises to the host nucleus. It is found in the host cytoplasm. The protein localises to the host perinuclear region. Its subcellular location is the secreted. The protein resides in the virion membrane. It localises to the host endoplasmic reticulum membrane. It catalyses the reaction Selective hydrolysis of -Xaa-Xaa-|-Yaa- bonds in which each of the Xaa can be either Arg or Lys and Yaa can be either Ser or Ala.. The catalysed reaction is RNA(n) + a ribonucleoside 5'-triphosphate = RNA(n+1) + diphosphate. It carries out the reaction a ribonucleoside 5'-triphosphate + H2O = a ribonucleoside 5'-diphosphate + phosphate + H(+). The enzyme catalyses ATP + H2O = ADP + phosphate + H(+). It catalyses the reaction a 5'-end (5'-triphosphoguanosine)-ribonucleoside in mRNA + S-adenosyl-L-methionine = a 5'-end (N(7)-methyl 5'-triphosphoguanosine)-ribonucleoside in mRNA + S-adenosyl-L-homocysteine. The catalysed reaction is a 5'-end (N(7)-methyl 5'-triphosphoguanosine)-ribonucleoside in mRNA + S-adenosyl-L-methionine = a 5'-end (N(7)-methyl 5'-triphosphoguanosine)-(2'-O-methyl-ribonucleoside) in mRNA + S-adenosyl-L-homocysteine + H(+). Plays a role in virus budding by binding to the cell membrane and gathering the viral RNA into a nucleocapsid that forms the core of a mature virus particle. During virus entry, may induce genome penetration into the host cytoplasm after hemifusion induced by the surface proteins. Can migrate to the cell nucleus where it modulates host functions. Functionally, inhibits RNA silencing by interfering with host Dicer. In terms of biological role, prevents premature fusion activity of envelope proteins in trans-Golgi by binding to envelope protein E at pH6.0. After virion release in extracellular space, gets dissociated from E dimers. Its function is as follows. Acts as a chaperone for envelope protein E during intracellular virion assembly by masking and inactivating envelope protein E fusion peptide. prM is the only viral peptide matured by host furin in the trans-Golgi network probably to avoid catastrophic activation of the viral fusion activity in acidic Golgi compartment prior to virion release. prM-E cleavage is inefficient, and many virions are only partially matured. These uncleaved prM would play a role in immune evasion. May play a role in virus budding. Exerts cytotoxic effects by activating a mitochondrial apoptotic pathway through M ectodomain. May display a viroporin activity. Functionally, binds to host cell surface receptor and mediates fusion between viral and cellular membranes. Envelope protein is synthesized in the endoplasmic reticulum in the form of heterodimer with protein prM. They play a role in virion budding in the ER, and the newly formed immature particle is covered with 60 spikes composed of heterodimer between precursor prM and envelope protein E. The virion is transported to the Golgi apparatus where the low pH causes dissociation of PrM-E heterodimers and formation of E homodimers. prM-E cleavage is inefficient, and many virions are only partially matured. These uncleaved prM would play a role in immune evasion. In terms of biological role, involved in immune evasion, pathogenesis and viral replication. Once cleaved off the polyprotein, is targeted to three destinations: the viral replication cycle, the plasma membrane and the extracellular compartment. Essential for viral replication. Required for formation of the replication complex and recruitment of other non-structural proteins to the ER-derived membrane structures. Excreted as a hexameric lipoparticle that plays a role against host immune response. Antagonizing the complement function. Binds to the host macrophages and dendritic cells. Inhibits signal transduction originating from Toll-like receptor 3 (TLR3). Its function is as follows. Component of the viral RNA replication complex that functions in virion assembly and antagonizes the host immune response. Required cofactor for the serine protease function of NS3. May have membrane-destabilizing activity and form viroporins. Functionally, displays three enzymatic activities: serine protease, NTPase and RNA helicase. NS3 serine protease, in association with NS2B, performs its autocleavage and cleaves the polyprotein at dibasic sites in the cytoplasm: C-prM, NS2A-NS2B, NS2B-NS3, NS3-NS4A, NS4A-2K and NS4B-NS5. NS3 RNA helicase binds RNA and unwinds dsRNA in the 3' to 5' direction. Also plays a role in virus assembly. In terms of biological role, regulates the ATPase activity of the NS3 helicase activity. NS4A allows NS3 helicase to conserve energy during unwinding. Its function is as follows. Functions as a signal peptide for NS4B and is required for the interferon antagonism activity of the latter. Induces the formation of ER-derived membrane vesicles where the viral replication takes place. Inhibits interferon (IFN)-induced host STAT1 phosphorylation and nuclear translocation, thereby preventing the establishment of cellular antiviral state by blocking the IFN-alpha/beta pathway. Functionally, replicates the viral (+) and (-) RNA genome, and performs the capping of genomes in the cytoplasm. NS5 methylates viral RNA cap at guanine N-7 and ribose 2'-O positions. Besides its role in RNA genome replication, also prevents the establishment of cellular antiviral state by blocking the interferon-alpha/beta (IFN-alpha/beta) signaling pathway. IFN-I induces binding of NS5 to host IFN-activated transcription factor STAT2, preventing its transcriptional activity. Host TRIM23 is the E3 ligase that interacts with and polyubiquitinates NS5 to promote its binding to STAT2 and trigger IFN-I signaling inhibition. The sequence is that of Genome polyprotein from Yellow fever virus (isolate Ivory Coast/85-82H/1982) (YFV).